The sequence spans 71 residues: Small, acid-soluble spore protein I (71 aa).

It belongs to the SspI family.

The protein localises to the spore core. In Geobacillus sp. (strain WCH70), this protein is Small, acid-soluble spore protein I.